We begin with the raw amino-acid sequence, 166 residues long: Putative universal stress protein SE_1385 (166 aa).

It belongs to the universal stress protein A family.

It localises to the cytoplasm. The chain is Putative universal stress protein SE_1385 from Staphylococcus epidermidis (strain ATCC 12228 / FDA PCI 1200).